The primary structure comprises 492 residues: NADH-quinone oxidoreductase subunit N (492 aa).

14 helical membrane-spanning segments follow: residues 18 to 38 (ILPM…NAFT), 45 to 65 (LNMF…LGLE), 80 to 100 (LSLV…FLAL), 108 to 128 (FQTA…QFMV), 133 to 153 (LLLM…LMAL), 167 to 187 (FTMG…FYLL), 209 to 229 (MLFA…VSLV), 250 to 270 (ISIV…GAFI), 277 to 297 (VEDI…LIAL), 305 to 325 (MLAY…FIHT), 333 to 353 (FVYW…LWLL), 381 to 401 (VAIL…FSVF), 415 to 435 (NHIL…FYYF), and 464 to 484 (MPIY…VFMM).

Belongs to the complex I subunit 2 family. NDH-1 is composed of 14 different subunits. Subunits NuoA, H, J, K, L, M, N constitute the membrane sector of the complex.

It is found in the cell inner membrane. It catalyses the reaction a quinone + NADH + 5 H(+)(in) = a quinol + NAD(+) + 4 H(+)(out). Its function is as follows. NDH-1 shuttles electrons from NADH, via FMN and iron-sulfur (Fe-S) centers, to quinones in the respiratory chain. The immediate electron acceptor for the enzyme in this species is believed to be ubiquinone. Couples the redox reaction to proton translocation (for every two electrons transferred, four hydrogen ions are translocated across the cytoplasmic membrane), and thus conserves the redox energy in a proton gradient. The chain is NADH-quinone oxidoreductase subunit N from Helicobacter acinonychis (strain Sheeba).